Here is a 225-residue protein sequence, read N- to C-terminus: UPF0758 protein Swoo_4561 (225 aa).

Positions 102–224 constitute an MPN domain; it reads ILSDPDLTRD…IVSFAERGWI (123 aa). Zn(2+) is bound by residues His173, His175, and Asp186. The short motif at 173-186 is the JAMM motif element; sequence HNHPSGVAEPSHAD.

It belongs to the UPF0758 family.

The protein is UPF0758 protein Swoo_4561 of Shewanella woodyi (strain ATCC 51908 / MS32).